Consider the following 123-residue polypeptide: Anti-lipopolysaccharide factor (123 aa).

An N-terminal signal peptide occupies residues 1-26; sequence MRTRVMAGLCVALVVMCLYMPQPCEA. Cysteine 55 and cysteine 76 form a disulfide bridge.

As to expression, strong expression in hemocytes, heart and muscle, with weaker expression detected in gills and hepatopancreas. No expression detected in eyes.

Its subcellular location is the secreted. Its function is as follows. Binds to bacterial LPS and may specifically inhibit the LPS-mediated activation of the hemolymph coagulation. It has a strong antibacterial effect especially on the growth of Gram-negative bacteria. This Scylla serrata (Mud crab) protein is Anti-lipopolysaccharide factor.